Reading from the N-terminus, the 402-residue chain is 2-pyrone synthase (402 aa).

Residues Lys60, Arg63, Cys169, Leu272, Arg274, Gly310, Arg312, and Ala313 each contribute to the acetoacetyl-CoA site. The active site involves Cys169.

This sequence belongs to the thiolase-like superfamily. Chalcone/stilbene synthases family. Expressed in both vegetative and reproductive organs. The expression is strong in the leaf, scape (the inflorescence stem) and corolla (both in the ligule and the unpigmented tube), moderate in the bract and carpel, detectable in the root and pappus but not detectable in the stamen.

The enzyme catalyses 2 malonyl-CoA + acetyl-CoA + 2 H(+) = triacetate lactone + 2 CO2 + 3 CoA. Functionally, polyketide synthase, which uses acetyl-CoA and two condensation reactions with malonyl-CoA to form triacetic acid lactone (also called methylpyrone), a precursor of phytoalexin. May participate in insect and pathogen resistance. The protein is 2-pyrone synthase of Gerbera hybrida (Daisy).